Here is a 715-residue protein sequence, read N- to C-terminus: ATP-dependent DNA helicase Hel308 (715 aa).

Residues Gln35 and 53–60 contribute to the ATP site; that span reads SPTGSGKT. Positions 40–203 constitute a Helicase ATP-binding domain; sequence KKGLLDGNRL…WLGAEPVATN (164 aa). The DEAH box signature appears at 152–155; the sequence is DELH. The Helicase C-terminal domain maps to 236-442; the sequence is HGDDAIIAYT…ERAFYTFLLG (207 aa).

Belongs to the helicase family. Hel308 subfamily. As to quaternary structure, monomer. Interacts with PINA ATPase which decreases both DNA helicase activities of this protein.

It carries out the reaction Couples ATP hydrolysis with the unwinding of duplex DNA by translocating in the 3'-5' direction.. The catalysed reaction is ATP + H2O = ADP + phosphate + H(+). The enzyme catalyses Couples ATP hydrolysis with the unwinding of duplex DNA at the replication fork by translocating in the 5'-3' direction. This creates two antiparallel DNA single strands (ssDNA). The leading ssDNA polymer is the template for DNA polymerase III holoenzyme which synthesizes a continuous strand.. Its activity is regulated as follows. PINA inhibits the (weak) 5'-3' but not the 3'-5' helicase activity of this protein on overhang substrates. Its function is as follows. DNA-dependent ATPase and 3'-5' DNA helicase that may be involved in repair of stalled replication forks. In terms of biological role, has predominantly 3'-5' helicase activity but also a weak 5'-3' helicase activity. Has the ability to unwind replication forks, preferentially removing the lagging strand. Hjc, Hjm (Hel308) and branch migration ATPase PINA coordinate HJ migration and cleavage of replication forks in a coordinated way. The protein is ATP-dependent DNA helicase Hel308 of Saccharolobus islandicus (strain REY15A) (Sulfolobus islandicus).